The sequence spans 776 residues: Mitochondrial intermediate peptidase (776 aa).

The transit peptide at 1 to 28 (MFVRFYKRLDRQYIQSQRRWILSSNKCL) directs the protein to the mitochondrion. The interval 48–71 (DHWEESQAQNTSSEQDNKGKNSSY) is disordered. A compositionally biased stretch (polar residues) spans 53–71 (SQAQNTSSEQDNKGKNSSY). Histidine 567 is a Zn(2+) binding site. Glutamate 568 is a catalytic residue. Positions 571 and 574 each coordinate Zn(2+).

The protein belongs to the peptidase M3 family. Zn(2+) is required as a cofactor.

It is found in the mitochondrion matrix. It carries out the reaction Release of an N-terminal octapeptide as second stage of processing of some proteins imported into the mitochondrion.. In terms of biological role, cleaves proteins, imported into the mitochondrion, to their mature size. While most mitochondrial precursor proteins are processed to the mature form in one step by mitochondrial processing peptidase (MPP), the sequential cleavage by MIP of an octapeptide after initial processing by MPP is a required step for a subgroup of nuclear-encoded precursor proteins destined for the matrix or the inner membrane. The protein is Mitochondrial intermediate peptidase (OCT1) of Eremothecium gossypii (strain ATCC 10895 / CBS 109.51 / FGSC 9923 / NRRL Y-1056) (Yeast).